A 900-amino-acid polypeptide reads, in one-letter code: Aldos-2-ulose dehydratase (900 aa).

Residues 1-433 (MYSKVFLKPH…NPSINVFLST (433 aa)) are dehydratase domain. Tyr-35 is an ascopyrone M binding site. 5 residues coordinate Mg(2+): Asp-101, Thr-103, Asn-105, Phe-107, and Asp-109. The ascopyrone M site is built by Tyr-116, Met-120, His-155, His-215, His-295, and His-337. His-155 acts as the Proton acceptor in catalysis. Positions 215, 295, 337, 343, 345, 347, 349, and 351 each coordinate Zn(2+). Ascopyrone M is bound by residues Tyr-414, Tyr-419, and Ala-627. Residues 434–739 (GILAERLDEE…EFPGFETFST (306 aa)) form an isomerase domain region. Positions 627 and 630 each coordinate 1,5-anhydro-D-fructose. Residues His-630, His-632, and Glu-639 each contribute to the Zn(2+) site. Ascopyrone M contacts are provided by Glu-639 and His-641. His-641 contributes to the 1,5-anhydro-D-fructose binding site. His-709 is a binding site for Zn(2+). Ascopyrone M is bound at residue Trp-726. Residue Trp-726 coordinates 1,5-anhydro-D-fructose.

In terms of assembly, homodimer. Requires Zn(2+) as cofactor.

The enzyme catalyses 1,5-anhydro-D-fructose = microthecin + H2O. It catalyses the reaction 1,5-anhydro-D-fructose = ascopyrone M + H2O. It carries out the reaction ascopyrone M = microthecin. The catalysed reaction is 2-dehydro-D-glucose = cortalcerone + H2O. It functions in the pathway carbohydrate metabolism; 1,5-anhydro-D-fructose degradation. A bifunctional enzyme which catalyzes the dehydration of anhydrofructose into ascopyrone M, and the isomerization of ascopyrone M into microthecin. To a lesser extent, can also act on 2-dehydro-D-glucopyranose (D-glucosone), leading to the antibiotic cortalcerone. This Phanerodontia chrysosporium (White-rot fungus) protein is Aldos-2-ulose dehydratase.